The primary structure comprises 292 residues: UPF0282 protein MJ1629 (292 aa).

It belongs to the UPF0282 family.

The chain is UPF0282 protein MJ1629 from Methanocaldococcus jannaschii (strain ATCC 43067 / DSM 2661 / JAL-1 / JCM 10045 / NBRC 100440) (Methanococcus jannaschii).